The following is a 181-amino-acid chain: Adenine phosphoribosyltransferase (181 aa).

It belongs to the purine/pyrimidine phosphoribosyltransferase family. As to quaternary structure, homodimer.

The protein localises to the cytoplasm. The enzyme catalyses AMP + diphosphate = 5-phospho-alpha-D-ribose 1-diphosphate + adenine. The protein operates within purine metabolism; AMP biosynthesis via salvage pathway; AMP from adenine: step 1/1. Catalyzes a salvage reaction resulting in the formation of AMP, that is energically less costly than de novo synthesis. The sequence is that of Adenine phosphoribosyltransferase from Vibrio vulnificus (strain CMCP6).